The chain runs to 203 residues: MSKIIIATANKGKAKEFEKIFAKFNIEVATLADFPEIGEIEETGTTFAENAALKAETVASVLNQTVIADDSGLIVDALDGAPGVYSARYAGVAHDDAKNNEKLLKNLEGVEPDKRTARFHCTLAVATPSEKTSFYTGEVEGVIAEQLCGTNGFGYDPLFFLPEFGLTMAEIPAEKKNEISHRANAIKQLEKDLVEVVEKVTKK.

Residue 8–13 (TANKGK) participates in substrate binding. Mg(2+)-binding residues include E41 and D70. The active-site Proton acceptor is D70. Substrate-binding positions include S71, 153–156 (FGYD), K176, and 181–182 (HR).

It belongs to the HAM1 NTPase family. As to quaternary structure, homodimer. It depends on Mg(2+) as a cofactor.

It carries out the reaction XTP + H2O = XMP + diphosphate + H(+). The enzyme catalyses dITP + H2O = dIMP + diphosphate + H(+). The catalysed reaction is ITP + H2O = IMP + diphosphate + H(+). In terms of biological role, pyrophosphatase that catalyzes the hydrolysis of nucleoside triphosphates to their monophosphate derivatives, with a high preference for the non-canonical purine nucleotides XTP (xanthosine triphosphate), dITP (deoxyinosine triphosphate) and ITP. Seems to function as a house-cleaning enzyme that removes non-canonical purine nucleotides from the nucleotide pool, thus preventing their incorporation into DNA/RNA and avoiding chromosomal lesions. This Listeria monocytogenes serovar 1/2a (strain ATCC BAA-679 / EGD-e) protein is dITP/XTP pyrophosphatase.